We begin with the raw amino-acid sequence, 159 residues long: Ribosomal RNA large subunit methyltransferase H (159 aa).

Residues Leu-76, Gly-108, and 127-132 each bind S-adenosyl-L-methionine; that span reads MSKMTF.

The protein belongs to the RNA methyltransferase RlmH family. In terms of assembly, homodimer.

The protein resides in the cytoplasm. The catalysed reaction is pseudouridine(1915) in 23S rRNA + S-adenosyl-L-methionine = N(3)-methylpseudouridine(1915) in 23S rRNA + S-adenosyl-L-homocysteine + H(+). In terms of biological role, specifically methylates the pseudouridine at position 1915 (m3Psi1915) in 23S rRNA. The protein is Ribosomal RNA large subunit methyltransferase H of Ureaplasma parvum serovar 3 (strain ATCC 27815 / 27 / NCTC 11736).